We begin with the raw amino-acid sequence, 476 residues long: GTPase Der (476 aa).

EngA-type G domains follow at residues 3-167 and 205-380; these read FTVA…GEER and LRVA…KVWN. GTP-binding positions include 9–16, 56–60, 119–122, 211–218, 258–262, and 323–326; these read GRPNVGKS, DTAGL, NKSE, GRPNAGKS, DTAGM, and NKWD. Residues 381–465 form the KH-like domain; sequence RRISTARLNR…PIRVHFRASE (85 aa).

It belongs to the TRAFAC class TrmE-Era-EngA-EngB-Septin-like GTPase superfamily. EngA (Der) GTPase family. As to quaternary structure, associates with the 50S ribosomal subunit.

GTPase that plays an essential role in the late steps of ribosome biogenesis. The polypeptide is GTPase Der (Rhizobium meliloti (strain 1021) (Ensifer meliloti)).